The sequence spans 465 residues: Sorting nexin-8 (465 aa).

Residues 1 to 19 (MTGRAMDPLPAAAVGAAAE) are compositionally biased toward low complexity. The tract at residues 1-36 (MTGRAMDPLPAAAVGAAAEAEADEEADPPASDLPTP) is disordered. Residues 73-181 (ARDTVQVELI…KLFLSFSGSD (109 aa)) form the PX domain. 3 residues coordinate a 1,2-diacyl-sn-glycero-3-phospho-(1D-myo-inositol-3-phosphate): Arg109, Lys135, and Arg148. Position 452 is a phosphothreonine (Thr452). The residue at position 456 (Ser456) is a Phosphoserine.

The protein belongs to the sorting nexin family.

The protein resides in the early endosome membrane. Functionally, may be involved in several stages of intracellular trafficking. May play a role in intracellular protein transport from early endosomes to the trans-Golgi network. This chain is Sorting nexin-8 (SNX8), found in Homo sapiens (Human).